A 244-amino-acid polypeptide reads, in one-letter code: Securin-like protein (244 aa).

The disordered stretch occupies residues 31–53 (ELEKTPSRGGLGLVVNSSKTPGG).

As to quaternary structure, forms a complex (via C-terminus) with separase sep-1. Interaction with ify-1 stabilizes sep-1. Also maintains the complex in the cytoplasm during interphase and recruits it to chromosomes during the first meiotic division. Interacts with E3 ubiquitin-protein ligase etc-1. Post-translationally, ubiquitinated by etc-1 likely at the onset of anaphase, resulting in its degradation. In terms of tissue distribution, expressed in germ cells including oocytes.

The protein resides in the cytoplasm. The protein localises to the chromosome. Its subcellular location is the cytoskeleton. It localises to the spindle. Its function is as follows. Acts as a chaperone and as an inhibitor for separase sep-1. Plays an essential role in maintaining chromosome cohesion prior to meiotic and mitotic anaphase, in cytokinesis and in organizing the spindle and the centrosome. Ubiquitination-dependent degradation at the onset of anaphase is likely to activate sep-1 resulting in the proteolysis of the cohesin complex and the subsequent segregation of the chromosomes. Also required for cortical granule exocytosis. The chain is Securin-like protein from Caenorhabditis elegans.